We begin with the raw amino-acid sequence, 88 residues long: Elongation factor 1-beta (88 aa).

Belongs to the EF-1-beta/EF-1-delta family.

Promotes the exchange of GDP for GTP in EF-1-alpha/GDP, thus allowing the regeneration of EF-1-alpha/GTP that could then be used to form the ternary complex EF-1-alpha/GTP/AAtRNA. This chain is Elongation factor 1-beta, found in Haloarcula marismortui (strain ATCC 43049 / DSM 3752 / JCM 8966 / VKM B-1809) (Halobacterium marismortui).